The sequence spans 334 residues: tRNA U34 carboxymethyltransferase (334 aa).

Carboxy-S-adenosyl-L-methionine is bound by residues K91, W105, K110, G130, 152-154, 181-182, M196, Y200, and R315; these read DPT and IE.

It belongs to the class I-like SAM-binding methyltransferase superfamily. CmoB family. As to quaternary structure, homotetramer.

It carries out the reaction carboxy-S-adenosyl-L-methionine + 5-hydroxyuridine(34) in tRNA = 5-carboxymethoxyuridine(34) in tRNA + S-adenosyl-L-homocysteine + H(+). Functionally, catalyzes carboxymethyl transfer from carboxy-S-adenosyl-L-methionine (Cx-SAM) to 5-hydroxyuridine (ho5U) to form 5-carboxymethoxyuridine (cmo5U) at position 34 in tRNAs. In Klebsiella pneumoniae subsp. pneumoniae (strain ATCC 700721 / MGH 78578), this protein is tRNA U34 carboxymethyltransferase.